Reading from the N-terminus, the 1024-residue chain is Seizure 6-like protein (1024 aa).

Residues 1–28 form the signal peptide; that stretch reads MPAARPPAAGLRGISLFLALLLGSPAAA. Residues 29-958 are Extracellular-facing; sequence LERDALPEGD…ETSLEGGNMA (930 aa). 3 disordered regions span residues 33–77, 108–184, and 212–234; these read ALPE…SQSA, RPKH…EVPL, and AHTL…EAPQ. A glycan (O-linked (GalNAc...) serine) is linked at Ser49. Residues 56–66 show a composition bias toward basic and acidic residues; sequence SPGKEHPEERV. Residues 110–120 are compositionally biased toward basic residues; the sequence is KHALPPKKKLP. Over residues 138–162 the composition is skewed to polar residues; sequence SAATVQRAGSQPASQGLDLLSSSTE. 2 O-glycosylated at one site regions span residues 147-161 and 176-180; these read SQPA…SSST and SEEAS. An intrachain disulfide couples Cys281 to Cys308. The 109-residue stretch at 281 to 389 folds into the CUB 1 domain; the sequence is CSVSFSNPEG…GTFQLHYQAF (109 aa). Residues Asn311, Asn328, and Asn350 are each glycosylated (N-linked (GlcNAc...) asparagine). Positions 391–450 constitute a Sushi 1 domain; sequence LSCNFPRRPDSGDVTVMDLHSGGVAHFHCHLGYELQGAKMLTCINASKPHWSSQEPICSA. 2 cysteine pairs are disulfide-bonded: Cys393-Cys433 and Cys419-Cys448. N-linked (GlcNAc...) asparagine glycans are attached at residues Asn435, Asn458, Asn474, Asn514, Asn576, Asn618, Asn674, and Asn742. Positions 452 to 562 constitute a CUB 2 domain; the sequence is CGGAVHNATI…STFNIRFEAF (111 aa). The 62-residue stretch at 565-626 folds into the Sushi 2 domain; that stretch reads GHCYEPYIQN…WNDTEPLCRA (62 aa). 2 disulfide bridges follow: Cys567/Cys609 and Cys594/Cys624. Residues 628 to 739 enclose the CUB 3 domain; sequence CGGELSAVAG…QGFIMNYIEV (112 aa). 3 consecutive Sushi domains span residues 743–802, 804–867, and 871–932; these read DSCS…FCEK, MYCT…HCVS, and LACD…VCKV. 6 disulfide bridges follow: Cys745–Cys787, Cys773–Cys800, Cys806–Cys848, Cys834–Cys865, Cys873–Cys915, and Cys901–Cys930. The helical transmembrane segment at 959–979 threads the bilayer; the sequence is LAIFIPVLIISLLLGGAYIYI. Residues 980–1024 are Cytoplasmic-facing; that stretch reads TRCRYYSNLRLPLMYSHPYSQITVETEFDNPIYETGETREYEVSI.

This sequence belongs to the SEZ6 family. Post-translationally, O-glycosylated. As to expression, widely expressed, including adult and fetal brains and lungs. Not expressed in all lung cancer cell lines.

It localises to the endoplasmic reticulum membrane. Functionally, may contribute to specialized endoplasmic reticulum functions in neurons. The protein is Seizure 6-like protein (SEZ6L) of Homo sapiens (Human).